The following is a 498-amino-acid chain: Guanosine-5'-triphosphate,3'-diphosphate pyrophosphatase (498 aa).

The protein belongs to the GppA/Ppx family. GppA subfamily.

The catalysed reaction is guanosine 3'-diphosphate 5'-triphosphate + H2O = guanosine 3',5'-bis(diphosphate) + phosphate + H(+). Its pathway is purine metabolism; ppGpp biosynthesis; ppGpp from GTP: step 2/2. Its function is as follows. Catalyzes the conversion of pppGpp to ppGpp. Guanosine pentaphosphate (pppGpp) is a cytoplasmic signaling molecule which together with ppGpp controls the 'stringent response', an adaptive process that allows bacteria to respond to amino acid starvation, resulting in the coordinated regulation of numerous cellular activities. This Pectobacterium carotovorum subsp. carotovorum (strain PC1) protein is Guanosine-5'-triphosphate,3'-diphosphate pyrophosphatase.